The sequence spans 210 residues: Outer-membrane lipoprotein LolB (210 aa).

A signal peptide spans 1–18 (MKKFTKILSLSTLLFLAG). A lipid anchor (N-palmitoyl cysteine) is attached at cysteine 19. Cysteine 19 is lipidated: S-diacylglycerol cysteine.

This sequence belongs to the LolB family. Monomer.

The protein localises to the cell outer membrane. Plays a critical role in the incorporation of lipoproteins in the outer membrane after they are released by the LolA protein. This is Outer-membrane lipoprotein LolB from Actinobacillus pleuropneumoniae serotype 7 (strain AP76).